Reading from the N-terminus, the 56-residue chain is MSHKNIWNKHSRTYGKGSRGCRICGNRSGLIRKYGLSICRQCFREKSQNLGFDKYR.

Zn(2+) contacts are provided by cysteine 21, cysteine 24, cysteine 39, and cysteine 42.

This sequence belongs to the universal ribosomal protein uS14 family. Zn(2+) serves as cofactor.

This Guillardia theta (Cryptophyte) protein is Small ribosomal subunit protein uS14 (rps29A).